The sequence spans 876 residues: DNA polymerase 1 (876 aa).

It belongs to the DNA polymerase type-B family.

The catalysed reaction is DNA(n) + a 2'-deoxyribonucleoside 5'-triphosphate = DNA(n+1) + diphosphate. In terms of biological role, this polymerase possesses two enzymatic activities: DNA synthesis (polymerase) and an exonucleolytic activity that degrades single-stranded DNA in the 3'- to 5'-direction. In Sulfolobus acidocaldarius (strain ATCC 33909 / DSM 639 / JCM 8929 / NBRC 15157 / NCIMB 11770), this protein is DNA polymerase 1 (dpo1).